Consider the following 802-residue polypeptide: Leucine--tRNA ligase (802 aa).

The 'HIGH' region signature appears at P40 to H51. Residues K576–S580 carry the 'KMSKS' region motif. K579 provides a ligand contact to ATP.

The protein belongs to the class-I aminoacyl-tRNA synthetase family.

It is found in the cytoplasm. It carries out the reaction tRNA(Leu) + L-leucine + ATP = L-leucyl-tRNA(Leu) + AMP + diphosphate. In Bacillus cereus (strain ATCC 14579 / DSM 31 / CCUG 7414 / JCM 2152 / NBRC 15305 / NCIMB 9373 / NCTC 2599 / NRRL B-3711), this protein is Leucine--tRNA ligase.